The following is a 294-amino-acid chain: Mitochondrial HMG-box protein CIM1 (294 aa).

The N-terminal 90 residues, 1–90 (MKATLLLKAQ…RLYYASFCQS (90 aa)), are a transit peptide targeting the mitochondrion. The tract at residues 27 to 102 (NRTPYTAFQY…IDILNVSKIE (76 aa)) is HMG-box A. The HMG-box B stretch occupies residues 110-258 (PIPAMSEYLL…IQILQKNMDI (149 aa)).

It localises to the mitochondrion matrix. Its function is as follows. Mitochondrial HMG-box protein that limits the copy number of mitochondrial DNA (mtDNA), antagonizing HMG-box containing protein ABF2, a mtDNA packaging factor. This chain is Mitochondrial HMG-box protein CIM1, found in Saccharomyces cerevisiae (strain ATCC 204508 / S288c) (Baker's yeast).